A 721-amino-acid chain; its full sequence is Polyribonucleotide nucleotidyltransferase (721 aa).

Asp-485 and Asp-491 together coordinate Mg(2+). The region spanning 552-611 (PKIYIVKIHPDKIREIIGPGGKVIRELQAMSNTRIEVDDSGTVKIAASTEEEARIAIKAV) is the KH domain. The 69-residue stretch at 621–689 (GEIYEGEVVR…PEGKIRLSRK (69 aa)) folds into the S1 motif domain. A disordered region spans residues 687–721 (SRKALLPAPEKGEEDEKSAPRSRRPGGNSDRRNNR).

This sequence belongs to the polyribonucleotide nucleotidyltransferase family. The cofactor is Mg(2+).

Its subcellular location is the cytoplasm. It catalyses the reaction RNA(n+1) + phosphate = RNA(n) + a ribonucleoside 5'-diphosphate. Its function is as follows. Involved in mRNA degradation. Catalyzes the phosphorolysis of single-stranded polyribonucleotides processively in the 3'- to 5'-direction. The polypeptide is Polyribonucleotide nucleotidyltransferase (Desulfosudis oleivorans (strain DSM 6200 / JCM 39069 / Hxd3) (Desulfococcus oleovorans)).